Consider the following 255-residue polypeptide: 3-deoxy-manno-octulosonate cytidylyltransferase (255 aa).

It belongs to the KdsB family.

It is found in the cytoplasm. It catalyses the reaction 3-deoxy-alpha-D-manno-oct-2-ulosonate + CTP = CMP-3-deoxy-beta-D-manno-octulosonate + diphosphate. It participates in nucleotide-sugar biosynthesis; CMP-3-deoxy-D-manno-octulosonate biosynthesis; CMP-3-deoxy-D-manno-octulosonate from 3-deoxy-D-manno-octulosonate and CTP: step 1/1. It functions in the pathway bacterial outer membrane biogenesis; lipopolysaccharide biosynthesis. In terms of biological role, activates KDO (a required 8-carbon sugar) for incorporation into bacterial lipopolysaccharide in Gram-negative bacteria. In Thermodesulfovibrio yellowstonii (strain ATCC 51303 / DSM 11347 / YP87), this protein is 3-deoxy-manno-octulosonate cytidylyltransferase.